The chain runs to 113 residues: Class I hydrophobin fvh1 (113 aa).

Residues 1-20 form the signal peptide; it reads MVSFRAFTVAASLFATLAAA. 4 cysteine pairs are disulfide-bonded: C34/C94, C41/C88, C42/C75, and C95/C108. N35 carries an N-linked (GlcNAc...) asparagine glycan. An N-linked (GlcNAc...) asparagine glycan is attached at N97.

The protein belongs to the fungal hydrophobin family. Self-assembles to form functional amyloid fibrils called rodlets. Self-assembly into fibrillar rodlets occurs spontaneously at hydrophobic:hydrophilic interfaces and the rodlets further associate laterally to form amphipathic monolayers.

It localises to the secreted. Its subcellular location is the cell wall. Functionally, aerial growth, conidiation, and dispersal of filamentous fungi in the environment rely upon a capability of their secreting small amphipathic proteins called hydrophobins (HPBs) with low sequence identity. Class I can self-assemble into an outermost layer of rodlet bundles on aerial cell surfaces, conferring cellular hydrophobicity that supports fungal growth, development and dispersal; whereas Class II form highly ordered films at water-air interfaces through intermolecular interactions but contribute nothing to the rodlet structure. Fvh1 is a class I hydrophobin involved in fruiting body initiation. In Flammulina velutipes (Agaricus velutipes), this protein is Class I hydrophobin fvh1.